Reading from the N-terminus, the 524-residue chain is Apoptosis inhibitor 5 (524 aa).

Residues 2–360 (PTVEELYRNY…HQLGRKLPDF (359 aa)) are ARM-like and Heat-like helical repeats. Residue lysine 251 is modified to N6-acetyllysine. Residues 370–391 (LKDFKIRLQYFARGLQVYIRQL) form a leucine-zipper region. The residue at position 399 (threonine 399) is a Phosphothreonine. Positions 452–524 (GQKRASEDTT…RGNRSRGRLY (73 aa)) are disordered. Positions 454–475 (KRASEDTTSGSPPKKSSAGPKR) match the Nuclear localization signal motif. Phosphoserine is present on residues serine 462, serine 464, and serine 469. A compositionally biased stretch (low complexity) spans 462–472 (SGSPPKKSSAG). The span at 487–497 (KYSSNLGNFNY) shows a compositional bias: polar residues. The residue at position 500 (arginine 500) is an Omega-N-methylarginine.

It belongs to the API5 family. Monomer. Interacts with FGF2 and ACIN1. Post-translationally, acetylation at Lys-251 impairs antiapoptotic function. In terms of tissue distribution, expressed in all tissues tested, including heart, brain, placenta, lung, liver, skeletal muscle, kidney and pancreas. Highest levels in heart, pancreas and placenta. Highly expressed in several cancers. Preferentially expressed in squamous cell carcinoma versus adenocarcinoma in non-small cell lung cancer.

The protein resides in the nucleus. Its subcellular location is the cytoplasm. Functionally, antiapoptotic factor that may have a role in protein assembly. Negatively regulates ACIN1. By binding to ACIN1, it suppresses ACIN1 cleavage from CASP3 and ACIN1-mediated DNA fragmentation. Also known to efficiently suppress E2F1-induced apoptosis. Its depletion enhances the cytotoxic action of the chemotherapeutic drugs. In Homo sapiens (Human), this protein is Apoptosis inhibitor 5.